The chain runs to 247 residues: Cementoblastoma-derived protein 1 (247 aa).

Residues 1–28 are compositionally biased toward polar residues; the sequence is MGTSSTDSQQAGHRRCSTSNTSAENLTC. 2 disordered regions span residues 1–52 and 147–183; these read MGTS…AGQP and EENS…EKVK.

Phosphorylated. Post-translationally, N-glycosylated. Expressed by cementoblasts, a subpopulation of periodontal ligament cells and cells located around vessels in periodontium (at protein level).

It localises to the cytoplasm. The protein resides in the nucleus. Its function is as follows. May play a role in development of the periodontium which surrounds and supports the teeth by promoting the differentiation of multi-potent cells from the periodontal ligament into cementoblasts to form the cementum. Binds hydroxyapatite and may promote the biomineralization of the cementum. Also promotes cell proliferation. The chain is Cementoblastoma-derived protein 1 from Homo sapiens (Human).